Reading from the N-terminus, the 493-residue chain is MYIGIDCGTQGTKAIVLDSVQKKVIGVGYAKHELITQSNGRREQQPNWWIEALQQALQIALKQAKNSPHFSPNLVKGIGISGQQHGLVMLDKNDRPLYKAKLWCDTETATENDILIEKLGGQTAVFEKLGIICQTGYTASKLSWFRQNYPDKFANIRKIMLPHDYLNYWLTGKFCTEFGDASGSGYFDVVKREWKREVFKYLAPELNMDEVLPKLLSAEQKIGVIKPEIATLFGFNENVIVSTGGGDNMMGAIGTGNIREGIATMSLGTSGTLYAYTQKPLLNLPPMIANFCSSNNGWLPLVCVMNITSSNKQLMNLLNIDIEELNQLAQQAPIGANGITILPFFNGERVPPLPNTKASILGLDSSNFTRENLCRAMMESATFTLRYGLDLFRQAGLKTSQIRLIGGGAKSSFWRQMIADVMNSEVVCLQEEEAAALGGAIQAMWANGEGELEFLCETFIHLDENSKAYPNLSQVKNYQNAYERYLTHLSQLY.

Residue 84 to 85 coordinates substrate; the sequence is QH. The active-site Proton acceptor is the aspartate 247.

Belongs to the FGGY kinase family.

It carries out the reaction D-xylulose + ATP = D-xylulose 5-phosphate + ADP + H(+). In terms of biological role, catalyzes the phosphorylation of D-xylulose to D-xylulose 5-phosphate. The sequence is that of Xylulose kinase from Haemophilus influenzae (strain ATCC 51907 / DSM 11121 / KW20 / Rd).